Consider the following 122-residue polypeptide: Nuclear transcription factor Y subunit beta (122 aa).

The segment at Val-1–Ile-12 is subunit association domain (SAD). Residues Val-1 to Arg-57 are b domain. The segment at Glu-58–Ser-122 is c domain.

It belongs to the NFYB/HAP3 subunit family. As to quaternary structure, heterotrimeric transcription factor composed of three components, NF-YA, NF-YB and NF-YC. NF-YB and NF-YC must interact and dimerize for NF-YA association and DNA binding.

The protein resides in the nucleus. In terms of biological role, component of the sequence-specific heterotrimeric transcription factor (NF-Y) which specifically recognizes a 5'-CCAAT-3' box motif found in the promoters of its target genes. NF-Y can function as both an activator and a repressor, depending on its interacting cofactors. The chain is Nuclear transcription factor Y subunit beta (nfyb) from Xenopus laevis (African clawed frog).